Consider the following 440-residue polypeptide: Platelet-activating factor acetylhydrolase (440 aa).

Residues 1 to 21 (MVPLKLQALFCLLCCLPWVHP) form the signal peptide. Residues Asn59, Asn75, and Asn199 are each glycosylated (N-linked (GlcNAc...) asparagine). The Nucleophile role is filled by Ser272. Active-site charge relay system residues include Asp295 and His350.

It belongs to the AB hydrolase superfamily. Lipase family. N-glycosylated. Plasma.

The protein localises to the secreted. It is found in the extracellular space. The catalysed reaction is a 1-O-alkyl-2-acetyl-sn-glycero-3-phosphocholine + H2O = a 1-O-alkyl-sn-glycero-3-phosphocholine + acetate + H(+). It catalyses the reaction 1-O-decyl-2-acetyl-sn-glycero-3-phosphocholine + H2O = 1-O-decyl-sn-glycero-3-phosphocholine + acetate + H(+). It carries out the reaction 1-O-dodecyl-2-acetyl-sn-glycero-3-phosphocholine + H2O = 1-O-dodecyl-sn-glycero-3-phosphocholine + acetate + H(+). The enzyme catalyses 1-O-tetradecyl-2-acetyl-sn-glycero-3-phosphocholine + H2O = 1-O-tetradecyl-sn-glycero-3-phosphocholine + acetate + H(+). The catalysed reaction is 1-O-hexadecyl-2-acetyl-sn-glycero-3-phosphocholine + H2O = 1-O-hexadecyl-sn-glycero-3-phosphocholine + acetate + H(+). It catalyses the reaction 1-O-octadecyl-2-acetyl-sn-glycero-3-phosphocholine + H2O = 1-O-octadecyl-sn-glycero-3-phosphocholine + acetate + H(+). It carries out the reaction 1-hexadecanoyl-2-acetyl-sn-glycero-3-phosphocholine + H2O = 1-hexadecanoyl-sn-glycero-3-phosphocholine + acetate + H(+). The enzyme catalyses 1-hexadecanoyl-2-propionyl-sn-glycero-3-phosphocholine + H2O = propanoate + 1-hexadecanoyl-sn-glycero-3-phosphocholine + H(+). The catalysed reaction is 1-hexadecanoyl-2-butanoyl-sn-glycero-3-phosphocholine + H2O = butanoate + 1-hexadecanoyl-sn-glycero-3-phosphocholine + H(+). It catalyses the reaction 1-hexadecanoyl-2-pentanoyl-sn-glycero-3-phosphocholine + H2O = pentanoate + 1-hexadecanoyl-sn-glycero-3-phosphocholine + H(+). It carries out the reaction 1-hexadecanoyl-2-glutaroyl-sn-glycero-3-phosphocholine + H2O = glutarate + 1-hexadecanoyl-sn-glycero-3-phosphocholine + H(+). The enzyme catalyses 1-hexadecanoyl-2-(5-oxopentanoyl)-sn-glycero-3-phosphocholine + H2O = 5-oxopentanoate + 1-hexadecanoyl-sn-glycero-3-phosphocholine + H(+). The catalysed reaction is 1-hexadecanoyl-2-(9-oxononanoyl)-sn-glycero-3-phosphocholine + H2O = 9-oxononanoate + 1-hexadecanoyl-sn-glycero-3-phosphocholine + H(+). It catalyses the reaction 1-hexadecanoyl-2-[9-hydroperoxy-(10E-octadecenoyl)]-sn-glycero-3-phosphocholine + H2O = 9-hydroperoxy-10E-octadecenoate + 1-hexadecanoyl-sn-glycero-3-phosphocholine + H(+). It carries out the reaction 1-hexadecanoyl-2-(10-hydroperoxy-8E-octadecenoyl)-sn-glycero-3-phosphocholine + H2O = 10-hydroperoxy-(8E)-octadecenoate + 1-hexadecanoyl-sn-glycero-3-phosphocholine + H(+). Its function is as follows. Lipoprotein-associated calcium-independent phospholipase A2 involved in phospholipid catabolism during inflammatory and oxidative stress response. At the lipid-aqueous interface, hydrolyzes the ester bond of fatty acyl group attached at sn-2 position of phospholipids (phospholipase A2 activity). Specifically targets phospholipids with a short-chain fatty acyl group at sn-2 position. Can hydrolyze phospholipids with long fatty acyl chains, only if they carry oxidized functional groups. Hydrolyzes and inactivates platelet-activating factor (PAF, 1-O-alkyl-2-acetyl-sn-glycero-3-phosphocholine), a potent pro-inflammatory signaling lipid that acts through PTAFR on various innate immune cells. Hydrolyzes oxidatively truncated phospholipids carrying an aldehyde group at omega position, preventing their accumulation in lipoprotein particles and uncontrolled pro-inflammatory effects. As part of high-density lipoprotein (HDL) particles, can hydrolyze phospholipids having long-chain fatty acyl hydroperoxides at sn-2 position and protect against potential accumulation of these oxylipins in the vascular wall. Catalyzes the release from membrane phospholipids of F2-isoprostanes, lipid biomarkers of cellular oxidative damage. The chain is Platelet-activating factor acetylhydrolase (Pla2g7) from Mus musculus (Mouse).